The primary structure comprises 688 residues: Translation initiation factor IF-2 (688 aa).

The disordered stretch occupies residues 53 to 101 (GAEKPSVADEFEVEEKVVRSKKNSNKNKKKGKANEDKRQDNFAGRQQTP). Residues 71-83 (RSKKNSNKNKKKG) show a composition bias toward basic residues. The 170-residue stretch at 190-359 (ERPAVVTIMG…LLVSEVEEYK (170 aa)) folds into the tr-type G domain. Residues 199-206 (GHVDHGKT) are G1. Residue 199-206 (GHVDHGKT) participates in GTP binding. The interval 224-228 (GITQH) is G2. A G3 region spans residues 245 to 248 (DTPG). Residues 245–249 (DTPGH) and 299–302 (NKMD) each bind GTP. The segment at 299–302 (NKMD) is G4. Residues 335–337 (SAI) form a G5 region.

It belongs to the TRAFAC class translation factor GTPase superfamily. Classic translation factor GTPase family. IF-2 subfamily.

The protein resides in the cytoplasm. One of the essential components for the initiation of protein synthesis. Protects formylmethionyl-tRNA from spontaneous hydrolysis and promotes its binding to the 30S ribosomal subunits. Also involved in the hydrolysis of GTP during the formation of the 70S ribosomal complex. The chain is Translation initiation factor IF-2 from Bacillus mycoides (strain KBAB4) (Bacillus weihenstephanensis).